We begin with the raw amino-acid sequence, 272 residues long: Acyl-[acyl-carrier-protein]--UDP-N-acetylglucosamine O-acyltransferase (272 aa).

Belongs to the transferase hexapeptide repeat family. LpxA subfamily. As to quaternary structure, homotrimer.

The protein resides in the cytoplasm. It carries out the reaction a (3R)-hydroxyacyl-[ACP] + UDP-N-acetyl-alpha-D-glucosamine = a UDP-3-O-[(3R)-3-hydroxyacyl]-N-acetyl-alpha-D-glucosamine + holo-[ACP]. It participates in glycolipid biosynthesis; lipid IV(A) biosynthesis; lipid IV(A) from (3R)-3-hydroxytetradecanoyl-[acyl-carrier-protein] and UDP-N-acetyl-alpha-D-glucosamine: step 1/6. Its function is as follows. Involved in the biosynthesis of lipid A, a phosphorylated glycolipid that anchors the lipopolysaccharide to the outer membrane of the cell. This Methylobacterium radiotolerans (strain ATCC 27329 / DSM 1819 / JCM 2831 / NBRC 15690 / NCIMB 10815 / 0-1) protein is Acyl-[acyl-carrier-protein]--UDP-N-acetylglucosamine O-acyltransferase.